The chain runs to 239 residues: Orotidine 5'-phosphate decarboxylase (239 aa).

Substrate is bound by residues D15, K36, 63-72 (DLKFHDIPNT), T127, R189, Q198, G218, and R219. K65 acts as the Proton donor in catalysis.

Belongs to the OMP decarboxylase family. Type 1 subfamily. In terms of assembly, homodimer.

It catalyses the reaction orotidine 5'-phosphate + H(+) = UMP + CO2. Its pathway is pyrimidine metabolism; UMP biosynthesis via de novo pathway; UMP from orotate: step 2/2. In terms of biological role, catalyzes the decarboxylation of orotidine 5'-monophosphate (OMP) to uridine 5'-monophosphate (UMP). In Prochlorococcus marinus subsp. pastoris (strain CCMP1986 / NIES-2087 / MED4), this protein is Orotidine 5'-phosphate decarboxylase.